We begin with the raw amino-acid sequence, 154 residues long: Ribonuclease HI (154 aa).

Residues 1–142 form the RNase H type-1 domain; sequence MPKQIEIFTD…CDELAKKGAE (142 aa). Residues Asp-10, Glu-48, Asp-70, and Asp-134 each contribute to the Mg(2+) site.

Belongs to the RNase H family. As to quaternary structure, monomer. The cofactor is Mg(2+).

The protein resides in the cytoplasm. The catalysed reaction is Endonucleolytic cleavage to 5'-phosphomonoester.. In terms of biological role, endonuclease that specifically degrades the RNA of RNA-DNA hybrids. The protein is Ribonuclease HI (rnhA) of Haemophilus influenzae (strain ATCC 51907 / DSM 11121 / KW20 / Rd).